Reading from the N-terminus, the 337-residue chain is Dihydroorotate dehydrogenase (quinone) (337 aa).

FMN contacts are provided by residues 61–65 (AGLDK) and T85. K65 is a binding site for substrate. Position 110-114 (110-114 (NRMGF)) interacts with substrate. 2 residues coordinate FMN: N138 and N171. Substrate is bound at residue N171. The active-site Nucleophile is S174. N176 serves as a coordination point for substrate. The FMN site is built by K216 and T244. Position 245 to 246 (245 to 246 (NT)) interacts with substrate. Residues G267, G296, and 317–318 (YS) contribute to the FMN site.

This sequence belongs to the dihydroorotate dehydrogenase family. Type 2 subfamily. In terms of assembly, monomer. The cofactor is FMN.

Its subcellular location is the cell membrane. It carries out the reaction (S)-dihydroorotate + a quinone = orotate + a quinol. It functions in the pathway pyrimidine metabolism; UMP biosynthesis via de novo pathway; orotate from (S)-dihydroorotate (quinone route): step 1/1. Catalyzes the conversion of dihydroorotate to orotate with quinone as electron acceptor. The polypeptide is Dihydroorotate dehydrogenase (quinone) (Thiobacillus denitrificans (strain ATCC 25259 / T1)).